The chain runs to 91 residues: Non-specific lipid-transfer protein 1 (91 aa).

4 disulfides stabilise this stretch: cysteine 3-cysteine 50, cysteine 13-cysteine 27, cysteine 28-cysteine 73, and cysteine 48-cysteine 87. Arginine 44 and tyrosine 79 together coordinate a 1,2-diacyl-sn-glycero-3-phosphocholine.

As to quaternary structure, monomer.

In terms of biological role, plant non-specific lipid-transfer proteins transfer phospholipids as well as galactolipids across membranes. May play a role in wax or cutin deposition in the cell walls of expanding epidermal cells and certain secretory tissues. Has antifungal activity against F.solani, F.oxysporum, P.aphanidermatum and S.rolfsii. Has antibacterial activity against the Gram-positive bacterium S.aureus but not against the Gram-negative bacterium S.typhimurium. This Vigna radiata var. radiata (Mung bean) protein is Non-specific lipid-transfer protein 1.